Here is a 168-residue protein sequence, read N- to C-terminus: Peptide deformylase 1 (168 aa).

Fe cation is bound by residues C92 and H134. E135 is an active-site residue. Residue H138 participates in Fe cation binding.

It belongs to the polypeptide deformylase family. Fe(2+) is required as a cofactor.

The catalysed reaction is N-terminal N-formyl-L-methionyl-[peptide] + H2O = N-terminal L-methionyl-[peptide] + formate. In terms of biological role, removes the formyl group from the N-terminal Met of newly synthesized proteins. Requires at least a dipeptide for an efficient rate of reaction. N-terminal L-methionine is a prerequisite for activity but the enzyme has broad specificity at other positions. This chain is Peptide deformylase 1, found in Pseudomonas syringae pv. tomato (strain ATCC BAA-871 / DC3000).